A 282-amino-acid chain; its full sequence is Elongation factor Ts (282 aa).

An involved in Mg(2+) ion dislocation from EF-Tu region spans residues 79-82 (TDFV).

The protein belongs to the EF-Ts family.

Its subcellular location is the cytoplasm. Functionally, associates with the EF-Tu.GDP complex and induces the exchange of GDP to GTP. It remains bound to the aminoacyl-tRNA.EF-Tu.GTP complex up to the GTP hydrolysis stage on the ribosome. In Shewanella woodyi (strain ATCC 51908 / MS32), this protein is Elongation factor Ts.